Reading from the N-terminus, the 134-residue chain is D-ribose pyranase (134 aa).

His-20 serves as the catalytic Proton donor. Substrate-binding positions include Asp-28, His-101, and Tyr-123 to Asn-125.

The protein belongs to the RbsD / FucU family. RbsD subfamily. In terms of assembly, homodecamer.

Its subcellular location is the cytoplasm. It catalyses the reaction beta-D-ribopyranose = beta-D-ribofuranose. The protein operates within carbohydrate metabolism; D-ribose degradation; D-ribose 5-phosphate from beta-D-ribopyranose: step 1/2. Catalyzes the interconversion of beta-pyran and beta-furan forms of D-ribose. This is D-ribose pyranase from Pseudomonas syringae pv. tomato (strain ATCC BAA-871 / DC3000).